The chain runs to 251 residues: Pyrroloquinoline-quinone synthase (251 aa).

It belongs to the PqqC family.

It carries out the reaction 6-(2-amino-2-carboxyethyl)-7,8-dioxo-1,2,3,4,7,8-hexahydroquinoline-2,4-dicarboxylate + 3 O2 = pyrroloquinoline quinone + 2 H2O2 + 2 H2O + H(+). It participates in cofactor biosynthesis; pyrroloquinoline quinone biosynthesis. Ring cyclization and eight-electron oxidation of 3a-(2-amino-2-carboxyethyl)-4,5-dioxo-4,5,6,7,8,9-hexahydroquinoline-7,9-dicarboxylic-acid to PQQ. The sequence is that of Pyrroloquinoline-quinone synthase from Pseudomonas syringae pv. tomato (strain ATCC BAA-871 / DC3000).